The primary structure comprises 296 residues: Acetyl-coenzyme A carboxylase carboxyl transferase subunit beta (296 aa).

Residues 25 to 294 (LWIKDPSTGE…NSDAPAPPEA (270 aa)) enclose the CoA carboxyltransferase N-terminal domain.

It belongs to the AccD/PCCB family. Acetyl-CoA carboxylase is a heterohexamer composed of biotin carboxyl carrier protein (AccB), biotin carboxylase (AccC) and two subunits each of ACCase subunit alpha (AccA) and ACCase subunit beta (AccD).

The protein localises to the cytoplasm. The catalysed reaction is N(6)-carboxybiotinyl-L-lysyl-[protein] + acetyl-CoA = N(6)-biotinyl-L-lysyl-[protein] + malonyl-CoA. It functions in the pathway lipid metabolism; malonyl-CoA biosynthesis; malonyl-CoA from acetyl-CoA: step 1/1. Its function is as follows. Component of the acetyl coenzyme A carboxylase (ACC) complex. Biotin carboxylase (BC) catalyzes the carboxylation of biotin on its carrier protein (BCCP) and then the CO(2) group is transferred by the transcarboxylase to acetyl-CoA to form malonyl-CoA. The sequence is that of Acetyl-coenzyme A carboxylase carboxyl transferase subunit beta from Brucella ovis (strain ATCC 25840 / 63/290 / NCTC 10512).